Here is a 471-residue protein sequence, read N- to C-terminus: Tryptophanase (471 aa).

3 positions are modified to N6-acetyllysine: K5, K115, and K156. An N6-(pyridoxal phosphate)lysine modification is found at K270. K450 is modified (N6-acetyllysine).

Belongs to the beta-eliminating lyase family. In terms of assembly, homotetramer. Pyridoxal 5'-phosphate is required as a cofactor.

The enzyme catalyses L-tryptophan + H2O = indole + pyruvate + NH4(+). Its pathway is amino-acid degradation; L-tryptophan degradation via pyruvate pathway; indole and pyruvate from L-tryptophan: step 1/1. The polypeptide is Tryptophanase (Escherichia coli O9:H4 (strain HS)).